The chain runs to 898 residues: Phosphoenolpyruvate carboxylase (898 aa).

Catalysis depends on residues histidine 138 and lysine 561.

This sequence belongs to the PEPCase type 1 family. Mg(2+) is required as a cofactor.

The enzyme catalyses oxaloacetate + phosphate = phosphoenolpyruvate + hydrogencarbonate. Functionally, forms oxaloacetate, a four-carbon dicarboxylic acid source for the tricarboxylic acid cycle. In Streptococcus suis (strain 98HAH33), this protein is Phosphoenolpyruvate carboxylase.